Consider the following 71-residue polypeptide: General transcription and DNA repair factor IIH subunit TFB5 (71 aa).

This sequence belongs to the TFB5 family. Component of the 7-subunit TFIIH core complex composed of XPB, XPD, TFB1/GTF2H1, GTF2H2/P44, TFB4/GTF2H3, TFB2/GTF2H4 and TFB5/GTF2H5, which is active in NER. The core complex associates with the 3-subunit CDK-activating kinase (CAK) module composed of CYCH1/cyclin H1, CDKD and MAT1/At4g30820 to form the 10-subunit holoenzyme (holo-TFIIH) active in transcription.

It is found in the nucleus. Functionally, component of the general transcription and DNA repair factor IIH (TFIIH) core complex, which is involved in general and transcription-coupled nucleotide excision repair (NER) of damaged DNA and, when complexed to CAK, in RNA transcription by RNA polymerase II. In NER, TFIIH acts by opening DNA around the lesion to allow the excision of the damaged oligonucleotide and its replacement by a new DNA fragment. In transcription, TFIIH has an essential role in transcription initiation. When the pre-initiation complex (PIC) has been established, TFIIH is required for promoter opening and promoter escape. Phosphorylation of the C-terminal tail (CTD) of the largest subunit of RNA polymerase II by the kinase module CAK controls the initiation of transcription. In Arabidopsis thaliana (Mouse-ear cress), this protein is General transcription and DNA repair factor IIH subunit TFB5.